A 1547-amino-acid chain; its full sequence is Tubby-related protein 4 (1547 aa).

WD repeat units lie at residues 80–119 (GHNS…WSVE), 123–162 (DRGA…HWSS), and 165–204 (NLES…LAHV). Positions 364 to 414 (ALYVVRVEHRVSSLQLLCQQAIASTLREDKDVNKLTLPPRLCSYLSTAFIP) constitute an SOCS box domain. The segment at 530 to 580 (SPKISRSSKSPKLPRISIEARKSPKLPRAAQEISRSPRLPMRKPSMGSPSL) is disordered. A compositionally biased stretch (low complexity) spans 533-546 (ISRSSKSPKLPRIS). Phosphoserine is present on Ser577. Arg949 and Arg954 each carry asymmetric dimethylarginine. 2 positions are modified to phosphoserine: Ser1347 and Ser1378. The segment at 1374–1414 (SLISSPRLGREKKKVKSQKDQLKSKKLNKTNEFQDSSESEP) is disordered. A TUB region spans residues 1436 to 1547 (SKRSLRTASE…ALANVTQRLK (112 aa)).

It belongs to the TUB family.

It localises to the cytoplasm. It participates in protein modification; protein ubiquitination. Functionally, may be a substrate-recognition component of a SCF-like ECS (Elongin-Cullin-SOCS-box protein) E3 ubiquitin ligase complex which mediates the ubiquitination and subsequent proteasomal degradation of target proteins. The protein is Tubby-related protein 4 (Tulp4) of Mus musculus (Mouse).